The primary structure comprises 516 residues: GMP synthase [glutamine-hydrolyzing] (516 aa).

A Glutamine amidotransferase type-1 domain is found at 6–199 (KVLILDFGSQ…LFEIAGLTSG (194 aa)). Cysteine 83 serves as the catalytic Nucleophile. Catalysis depends on residues histidine 173 and glutamate 175. The region spanning 200-391 (WTMSSFLETE…LGMPDFIIWR (192 aa)) is the GMPS ATP-PPase domain. 227 to 233 (SGGVDST) lines the ATP pocket.

In terms of assembly, homodimer.

It catalyses the reaction XMP + L-glutamine + ATP + H2O = GMP + L-glutamate + AMP + diphosphate + 2 H(+). It functions in the pathway purine metabolism; GMP biosynthesis; GMP from XMP (L-Gln route): step 1/1. Functionally, catalyzes the synthesis of GMP from XMP. This chain is GMP synthase [glutamine-hydrolyzing], found in Solidesulfovibrio magneticus (strain ATCC 700980 / DSM 13731 / RS-1) (Desulfovibrio magneticus).